The sequence spans 256 residues: Small ribosomal subunit protein eS1 (256 aa).

At alanine 2 the chain carries N-acetylalanine; partial.

Belongs to the eukaryotic ribosomal protein eS1 family. In terms of assembly, component of the small ribosomal subunit. Mature ribosomes consist of a small (40S) and a large (60S) subunit. The 40S subunit contains about 33 different proteins and 1 molecule of RNA (18S). The 60S subunit contains about 49 different proteins and 3 molecules of RNA (25S, 5.8S and 5S).

Its subcellular location is the cytoplasm. This is Small ribosomal subunit protein eS1 from Fusarium vanettenii (strain ATCC MYA-4622 / CBS 123669 / FGSC 9596 / NRRL 45880 / 77-13-4) (Fusarium solani subsp. pisi).